The sequence spans 490 residues: Hexokinase (490 aa).

The 446-residue stretch at 21–466 (QNLLEHIKHF…SGVGAALIAA (446 aa)) folds into the Hexokinase domain. Residues 75–209 (DGKETGTFLA…GLPIKVAALI (135 aa)) are hexokinase small subdomain. Residues 210 to 455 (NDTTGTLIAS…DKVTIHAAED (246 aa)) are hexokinase large subdomain.

This sequence belongs to the hexokinase family. Monomer.

The enzyme catalyses a D-hexose + ATP = a D-hexose 6-phosphate + ADP + H(+). It carries out the reaction D-fructose + ATP = D-fructose 6-phosphate + ADP + H(+). The catalysed reaction is D-glucose + ATP = D-glucose 6-phosphate + ADP + H(+). The protein operates within carbohydrate metabolism; hexose metabolism. Its pathway is carbohydrate degradation; glycolysis; D-glyceraldehyde 3-phosphate and glycerone phosphate from D-glucose: step 1/4. In terms of biological role, catalyzes the phosphorylation of hexose, such as D-glucose and D-fructose, to hexose 6-phosphate (D-glucose 6-phosphate and D-fructose 6-phosphate, respectively). Mediates the initial step of glycolysis by catalyzing phosphorylation of D-glucose to D-glucose 6-phosphate. This chain is Hexokinase (hxkA), found in Emericella nidulans (strain FGSC A4 / ATCC 38163 / CBS 112.46 / NRRL 194 / M139) (Aspergillus nidulans).